The sequence spans 231 residues: NADH-ubiquinone oxidoreductase chain 4 (231 aa).

7 helical membrane passes run 1–21, 34–54, 61–80, 84–106, 118–138, 156–176, and 211–231; these read PIAGSMVLAAILLKLGGYGII, LFIPFIVLALWGATLANLTCL, SLIAYSSISHMGLVVAAVII, WGLSGAMALMIAHGFTSSALFCL, ILILTRGFHNILPMATTWWLL, LLIVSTLFNWCPTTIIMLGLS, and LLMILHIIPLLMISMKPELVI.

This sequence belongs to the complex I subunit 4 family.

Its subcellular location is the mitochondrion membrane. It carries out the reaction a ubiquinone + NADH + 5 H(+)(in) = a ubiquinol + NAD(+) + 4 H(+)(out). In terms of biological role, core subunit of the mitochondrial membrane respiratory chain NADH dehydrogenase (Complex I) that is believed to belong to the minimal assembly required for catalysis. Complex I functions in the transfer of electrons from NADH to the respiratory chain. The immediate electron acceptor for the enzyme is believed to be ubiquinone. This is NADH-ubiquinone oxidoreductase chain 4 (MT-ND4) from Hypnale hypnale (Merrem's hump-nosed viper).